A 154-amino-acid polypeptide reads, in one-letter code: UPF0178 protein YaiI (154 aa).

The protein belongs to the UPF0178 family.

The sequence is that of UPF0178 protein YaiI from Escherichia fergusonii (strain ATCC 35469 / DSM 13698 / CCUG 18766 / IAM 14443 / JCM 21226 / LMG 7866 / NBRC 102419 / NCTC 12128 / CDC 0568-73).